The sequence spans 134 residues: Fatty acid-binding protein 5 (134 aa).

Residues 23–33 (KELGVGMAMRK) carry the Nuclear localization signal motif. Residues R109 and 129 to 131 (RVY) contribute to the hexadecanoate site. The N-eicosanoyl ethanolamine site is built by R109 and Y131. Residue 129–131 (RVY) coordinates (9Z,12Z)-octadecadienoate.

This sequence belongs to the calycin superfamily. Fatty-acid binding protein (FABP) family. As to quaternary structure, monomer.

It is found in the cytoplasm. Its subcellular location is the nucleus. The protein resides in the synapse. It localises to the postsynaptic density. The protein localises to the secreted. The enzyme catalyses hexadecanoate(out) = hexadecanoate(in). The catalysed reaction is (9Z,12Z)-octadecadienoate(out) = (9Z,12Z)-octadecadienoate(in). It catalyses the reaction (9Z)-octadecenoate(out) = (9Z)-octadecenoate(in). In terms of biological role, intracellular carrier for long-chain fatty acids and related active lipids, such as endocannabinoids, that regulate the metabolism and actions of the ligands they bind. In addition to the cytosolic transport, selectively delivers specific fatty acids from the cytosol to the nucleus, wherein they activate nuclear receptors. Delivers retinoic acid to the nuclear receptor peroxisome proliferator-activated receptor delta; which promotes proliferation and survival. May also serve as a synaptic carrier of endocannabinoid at central synapses and thus controls retrograde endocannabinoid signaling. Modulates inflammation by regulating PTGES induction via NF-kappa-B activation, and prostaglandin E2 (PGE2) biosynthesis during inflammation. Has the highest binding affinity for docosahexaenoic acid (DHA) and decreasing relative affinity for eicosapentaenoic acid (EPA), alpha-linolenic acid (ALA), oleic acid, palmitic acid, linoleic acid and stearic acid, respectively. This Pygoscelis papua (Gentoo penguin) protein is Fatty acid-binding protein 5.